An 826-amino-acid chain; its full sequence is Leucine--tRNA ligase (826 aa).

The short motif at 41 to 51 (PYPSGKLHMGH) is the 'HIGH' region element. Residues 586-590 (KMSKS) carry the 'KMSKS' region motif. Residue Lys589 coordinates ATP.

This sequence belongs to the class-I aminoacyl-tRNA synthetase family.

Its subcellular location is the cytoplasm. The catalysed reaction is tRNA(Leu) + L-leucine + ATP = L-leucyl-tRNA(Leu) + AMP + diphosphate. The sequence is that of Leucine--tRNA ligase from Natranaerobius thermophilus (strain ATCC BAA-1301 / DSM 18059 / JW/NM-WN-LF).